A 187-amino-acid polypeptide reads, in one-letter code: MKLIVGLGNPELRHAATRHNIGFDVIDHLAGSSTFSSGKGNYRFTKITAPGGPLILVKPMTYMNLSGHAVVAAMNFWKIERENLLVICDDVNIPLGTIRIRAKGSAGGQNGLKHIIQSLGSEEFARLRVGVGGENMPASLSSFVLSKFTAEERKCIDKVIPVCADAVLDFASLGVEHAMTKYNGQVC.

His14 is a binding site for tRNA. The active-site Proton acceptor is His19. 3 residues coordinate tRNA: Tyr62, Asn64, and Asn110.

Belongs to the PTH family. As to quaternary structure, monomer.

Its subcellular location is the cytoplasm. It carries out the reaction an N-acyl-L-alpha-aminoacyl-tRNA + H2O = an N-acyl-L-amino acid + a tRNA + H(+). In terms of biological role, hydrolyzes ribosome-free peptidyl-tRNAs (with 1 or more amino acids incorporated), which drop off the ribosome during protein synthesis, or as a result of ribosome stalling. Catalyzes the release of premature peptidyl moieties from peptidyl-tRNA molecules trapped in stalled 50S ribosomal subunits, and thus maintains levels of free tRNAs and 50S ribosomes. The chain is Peptidyl-tRNA hydrolase from Chlorobaculum tepidum (strain ATCC 49652 / DSM 12025 / NBRC 103806 / TLS) (Chlorobium tepidum).